A 264-amino-acid chain; its full sequence is Small ribosomal subunit protein eS1 (264 aa).

The segment at 233-264 is disordered; it reads GEGGGAGKPAGDETGAKVERADGYEPPVQESV. A compositionally biased stretch (basic and acidic residues) spans 242 to 255; the sequence is AGDETGAKVERADG.

It belongs to the eukaryotic ribosomal protein eS1 family. Component of the small ribosomal subunit. Mature ribosomes consist of a small (40S) and a large (60S) subunit. The 40S subunit contains about 33 different proteins and 1 molecule of RNA (18S). The 60S subunit contains about 49 different proteins and 3 molecules of RNA (28S, 5.8S and 5S). Part of the small subunit (SSU) processome, composed of more than 70 proteins and the RNA chaperone small nucleolar RNA (snoRNA) U3.

It is found in the cytoplasm. Its subcellular location is the nucleus. The protein localises to the nucleolus. Functionally, component of the small ribosomal subunit. The ribosome is a large ribonucleoprotein complex responsible for the synthesis of proteins in the cell. Part of the small subunit (SSU) processome, first precursor of the small eukaryotic ribosomal subunit. During the assembly of the SSU processome in the nucleolus, many ribosome biogenesis factors, an RNA chaperone and ribosomal proteins associate with the nascent pre-rRNA and work in concert to generate RNA folding, modifications, rearrangements and cleavage as well as targeted degradation of pre-ribosomal RNA by the RNA exosome. May play a role during erythropoiesis. In Xenopus tropicalis (Western clawed frog), this protein is Small ribosomal subunit protein eS1 (rps3a).